The following is a 1029-amino-acid chain: 2-oxoglutarate dehydrogenase, mitochondrial (1029 aa).

Thiamine diphosphate contacts are provided by R317, D415, N448, I450, and Q676. 3 residues coordinate Mg(2+): D415, N448, and I450.

It belongs to the alpha-ketoglutarate dehydrogenase family. As to quaternary structure, homodimer. Component of the 2-oxoglutarate dehydrogenase complex. It depends on thiamine diphosphate as a cofactor. Requires Mg(2+) as cofactor.

The protein localises to the mitochondrion matrix. The enzyme catalyses N(6)-[(R)-lipoyl]-L-lysyl-[protein] + 2-oxoglutarate + H(+) = N(6)-[(R)-S(8)-succinyldihydrolipoyl]-L-lysyl-[protein] + CO2. Its function is as follows. The 2-oxoglutarate dehydrogenase complex catalyzes the overall conversion of 2-oxoglutarate to succinyl-CoA and CO(2). It contains multiple copies of three enzymatic components: 2-oxoglutarate dehydrogenase (E1), dihydrolipoamide succinyltransferase (E2) and lipoamide dehydrogenase (E3). The sequence is that of 2-oxoglutarate dehydrogenase, mitochondrial (ogdh-1) from Caenorhabditis elegans.